The primary structure comprises 161 residues: Dermonecrotic toxin LarSicTox-alphaI-1 (161 aa).

It belongs to the arthropod phospholipase D family. Class II subfamily. The cofactor is Mg(2+). Contains 2 disulfide bonds. In terms of tissue distribution, expressed by the venom gland.

Its subcellular location is the secreted. It catalyses the reaction an N-(acyl)-sphingosylphosphocholine = an N-(acyl)-sphingosyl-1,3-cyclic phosphate + choline. The catalysed reaction is an N-(acyl)-sphingosylphosphoethanolamine = an N-(acyl)-sphingosyl-1,3-cyclic phosphate + ethanolamine. The enzyme catalyses a 1-acyl-sn-glycero-3-phosphocholine = a 1-acyl-sn-glycero-2,3-cyclic phosphate + choline. It carries out the reaction a 1-acyl-sn-glycero-3-phosphoethanolamine = a 1-acyl-sn-glycero-2,3-cyclic phosphate + ethanolamine. Its function is as follows. Dermonecrotic toxins cleave the phosphodiester linkage between the phosphate and headgroup of certain phospholipids (sphingolipid and lysolipid substrates), forming an alcohol (often choline) and a cyclic phosphate. This toxin acts on sphingomyelin (SM). It may also act on ceramide phosphoethanolamine (CPE), lysophosphatidylcholine (LPC) and lysophosphatidylethanolamine (LPE), but not on lysophosphatidylserine (LPS), and lysophosphatidylglycerol (LPG). It acts by transphosphatidylation, releasing exclusively cyclic phosphate products as second products. Induces dermonecrosis, hemolysis, increased vascular permeability, edema, inflammatory response, and platelet aggregation. This Loxosceles arizonica (Arizona brown spider) protein is Dermonecrotic toxin LarSicTox-alphaI-1.